The chain runs to 264 residues: Formamidopyrimidine-DNA glycosylase (264 aa).

The Schiff-base intermediate with DNA role is filled by P2. E3 functions as the Proton donor in the catalytic mechanism. Catalysis depends on K58, which acts as the Proton donor; for beta-elimination activity. H89, R107, and R144 together coordinate DNA. The FPG-type zinc finger occupies 229-263 (RVYQRTGEPCLNCKTPIRRVIVTQRSSHFCPHCQK). The active-site Proton donor; for delta-elimination activity is the R253.

Belongs to the FPG family. As to quaternary structure, monomer. Zn(2+) serves as cofactor.

The enzyme catalyses Hydrolysis of DNA containing ring-opened 7-methylguanine residues, releasing 2,6-diamino-4-hydroxy-5-(N-methyl)formamidopyrimidine.. The catalysed reaction is 2'-deoxyribonucleotide-(2'-deoxyribose 5'-phosphate)-2'-deoxyribonucleotide-DNA = a 3'-end 2'-deoxyribonucleotide-(2,3-dehydro-2,3-deoxyribose 5'-phosphate)-DNA + a 5'-end 5'-phospho-2'-deoxyribonucleoside-DNA + H(+). In terms of biological role, involved in base excision repair of DNA damaged by oxidation or by mutagenic agents. Acts as a DNA glycosylase that recognizes and removes damaged bases. Has a preference for oxidized purines, such as 7,8-dihydro-8-oxoguanine (8-oxoG). Has AP (apurinic/apyrimidinic) lyase activity and introduces nicks in the DNA strand. Cleaves the DNA backbone by beta-delta elimination to generate a single-strand break at the site of the removed base with both 3'- and 5'-phosphates. The protein is Formamidopyrimidine-DNA glycosylase of Solibacter usitatus (strain Ellin6076).